A 655-amino-acid polypeptide reads, in one-letter code: A-type voltage-gated potassium channel KCND3 (655 aa).

Topologically, residues 1 to 182 are cytoplasmic; sequence MAAGVAAWLP…FENPHTSTLA (182 aa). An interaction with KCNIP1 and KCNIP2 region spans residues 6–21; that stretch reads AAWLPFARAAAIGWMP. The interaction with KCNIP1 stretch occupies residues 70-78; the sequence is EKEFFFNED. 4 residues coordinate Zn(2+): His-104, Cys-110, Cys-131, and Cys-132. Position 153 is a phosphoserine (Ser-153). A helical transmembrane segment spans residues 183–204; it reads LVFYYVTGFFIAVSVITNVVET. Topologically, residues 205 to 223 are extracellular; that stretch reads VPCGTVPGSKELPCGERYS. The chain crosses the membrane as a helical span at residues 224–246; sequence VAFFCLDTACVMIFTVEYLLRLF. The Cytoplasmic segment spans residues 247–253; that stretch reads AAPSRYR. The chain crosses the membrane as a helical span at residues 254–277; it reads FIRSVMSIIDVVAIMPYYIGLVMT. The Extracellular portion of the chain corresponds to 278-283; sequence NNEDVS. Residues 284 to 306 form a helical; Voltage-sensor membrane-spanning segment; it reads GAFVTLRVFRVFRIFKFSRHSQG. Residues 307-318 lie on the Cytoplasmic side of the membrane; it reads LRILGYTLKSCA. A helical transmembrane segment spans residues 319–343; the sequence is SELGFLLFSLTMAIIIFATVMFYAE. The Extracellular portion of the chain corresponds to 344-352; the sequence is KGSSASKFT. The helical intramembrane region spans 353 to 366; that stretch reads SIPASFWYTIVTMT. The K(+) site is built by Thr-367, Leu-368, Gly-369, and Tyr-370. Positions 367–372 match the Selectivity filter motif; that stretch reads TLGYGD. The stretch at 367 to 374 is an intramembrane region; it reads TLGYGDMV. Residues 378–400 form a helical membrane-spanning segment; that stretch reads IAGKIFGSICSLSGVLVIALPVP. The Cytoplasmic portion of the chain corresponds to 401–655; it reads VIVSNFSRIY…ASNVVKVSAL (255 aa). A Phosphothreonine modification is found at Thr-459. Residues 470–487 are interaction with KCNIP1 and KCNIP2; the sequence is SLIESQHHHLLHCLEKTT. The tract at residues 472 to 487 is mediates dendritic targeting; the sequence is IESQHHHLLHCLEKTT. The span at 525–548 shows a compositional bias: polar residues; it reads MQNYPSTRSPSLSSHPGLTTTCCS. Positions 525 to 565 are disordered; sequence MQNYPSTRSPSLSSHPGLTTTCCSRRSKKTTHLPNSNLPAT. At Ser-569 the chain carries Phosphoserine; by CaMK2D. Ser-585 is modified (phosphoserine). The tract at residues 615–655 is disordered; it reads ISIPTPPALTPEGESRPPPASPGPNTNIPSIASNVVKVSAL. The segment covering 637 to 647 has biased composition (polar residues); that stretch reads GPNTNIPSIAS.

Belongs to the potassium channel family. D (Shal) (TC 1.A.1.2) subfamily. Kv4.3/KCND3 sub-subfamily. As to quaternary structure, homotetramer. Heterotetramer with KCND2. Associates with the regulatory subunits KCNIP3 and KCNIP4. Interacts with KCNE1, KCNE2, SCN1B and KCNAB1 and DLG1. Component of heteromultimeric potassium channels. Identified in potassium channel complexes containing KCND1, KCND2, KCND3, KCNIP1, KCNIP2, KCNIP3, KCNIP4, DPP6 and DPP10. Interacts with KCNIP1; each KCNIP1 monomer interacts with two adjacent KCND3 subunits, through both the N-terminal inactivation ball of a KCND3 subunit and a C-terminal helix from the adjacent KCND3 subunit, clamping them together; this interaction stabilizes the tetrameric form and modulates the channel gating kinetics namely channel activation and inactivation kinetics and rate of recovery from inactivation. Interacts with DPP6; this interaction modulates the channel gating kinetics namely channel activation and inactivation kinetics and rate of recovery from inactivation. Interacts with KCNIP2; each KCNIP2 monomer interacts with two adjacent KCND3 subunits, through both the N-terminal inactivation ball of a KCND3 subunit and a C-terminal helix from the adjacent KCND3 subunit, clamping them together; this interaction modulates the channel gating kinetics. Regulated through phosphorylation at Ser-569 by CaMK2D. Highly expressed in heart and brain, in particular in cortex, cerebellum, amygdala and caudate nucleus. Detected at lower levels in liver, skeletal muscle, kidney and pancreas.

The protein resides in the cell membrane. It localises to the sarcolemma. The protein localises to the cell projection. It is found in the dendrite. The enzyme catalyses K(+)(in) = K(+)(out). Its function is as follows. Pore-forming (alpha) subunit of voltage-gated A-type potassium channels that mediates transmembrane potassium transport in excitable membranes, in brain and heart. In cardiomyocytes, may generate the transient outward potassium current I(To). In neurons, may conduct the transient subthreshold somatodendritic A-type potassium current (ISA). Kinetics properties are characterized by fast activation at subthreshold membrane potentials, rapid inactivation, and quick recovery from inactivation. Channel properties are modulated by interactions with regulatory subunits. Interaction with the regulatory subunits KCNIP1 or KCNIP2 modulates the channel gating kinetics namely channel activation and inactivation kinetics and rate of recovery from inactivation. Likewise, interaction with DPP6 modulates the channel gating kinetics namely channel activation and inactivation kinetics. This is A-type voltage-gated potassium channel KCND3 (KCND3) from Homo sapiens (Human).